We begin with the raw amino-acid sequence, 530 residues long: DNA damage-binding protein cmr1 (530 aa).

Disordered stretches follow at residues 34 to 115 (VGLF…RKSD) and 224 to 250 (TKPV…LTTL). Basic residues predominate over residues 52-62 (AKKKKPAPKKV). Residues 89-108 (EVAKRKADEHDAALQEAERA) show a composition bias toward basic and acidic residues. One copy of the WD 1 repeat lies at 188–229 (LTPERIYAMTFHPSESKPLIFAGDKMGHLGVLDASQTKPVSA). The span at 233-244 (DEDEEDDDDDPD) shows a compositional bias: acidic residues. 6 WD repeats span residues 252–292 (PHTR…SVER), 302–339 (VPIS…QDSA), 344–384 (LSDK…HKSP), 389–430 (EHES…ASWK), 453–496 (GRWV…LAQL), and 499–530 (DGIT…CLWM).

It belongs to the WD repeat DDB2/WDR76 family.

Functionally, DNA-binding protein that binds to both single- and double-stranded DNA. Binds preferentially to UV-damaged DNA. May be involved in DNA-metabolic processes. The chain is DNA damage-binding protein cmr1 from Aspergillus terreus (strain NIH 2624 / FGSC A1156).